A 99-amino-acid polypeptide reads, in one-letter code: Ferredoxin, vegetative (99 aa).

The 2Fe-2S ferredoxin-type domain occupies 4 to 96 (YQVRLINKKR…DCTIRTHQEP (93 aa)). The [2Fe-2S] cluster site is built by C42, C47, C50, and C80.

This sequence belongs to the 2Fe2S plant-type ferredoxin family. [2Fe-2S] cluster serves as cofactor.

Functionally, ferredoxins are iron-sulfur proteins that transfer electrons in a wide variety of metabolic reactions. Donates electrons to the nitrogenase 2. The protein is Ferredoxin, vegetative (fdxH2) of Trichormus variabilis (strain ATCC 29413 / PCC 7937) (Anabaena variabilis).